A 203-amino-acid polypeptide reads, in one-letter code: Glycerol-3-phosphate acyltransferase (203 aa).

4 helical membrane passes run 6–26, 82–102, 118–138, and 141–161; these read LTLL…AVLV, AISL…PVFF, APIG…LVLI, and YSSL…WWLD.

It belongs to the PlsY family. Probably interacts with PlsX.

It is found in the cell inner membrane. The catalysed reaction is an acyl phosphate + sn-glycerol 3-phosphate = a 1-acyl-sn-glycero-3-phosphate + phosphate. Its pathway is lipid metabolism; phospholipid metabolism. In terms of biological role, catalyzes the transfer of an acyl group from acyl-phosphate (acyl-PO(4)) to glycerol-3-phosphate (G3P) to form lysophosphatidic acid (LPA). This enzyme utilizes acyl-phosphate as fatty acyl donor, but not acyl-CoA or acyl-ACP. In Shewanella oneidensis (strain ATCC 700550 / JCM 31522 / CIP 106686 / LMG 19005 / NCIMB 14063 / MR-1), this protein is Glycerol-3-phosphate acyltransferase.